A 76-amino-acid chain; its full sequence is Acyl carrier protein (76 aa).

The 76-residue stretch at 1–76 (MATFDKVKDI…DVVNYIEQNQ (76 aa)) folds into the Carrier domain. Serine 36 is modified (O-(pantetheine 4'-phosphoryl)serine).

This sequence belongs to the acyl carrier protein (ACP) family. In terms of processing, 4'-phosphopantetheine is transferred from CoA to a specific serine of apo-ACP by AcpS. This modification is essential for activity because fatty acids are bound in thioester linkage to the sulfhydryl of the prosthetic group.

The protein resides in the cytoplasm. The protein operates within lipid metabolism; fatty acid biosynthesis. In terms of biological role, carrier of the growing fatty acid chain in fatty acid biosynthesis. This Natranaerobius thermophilus (strain ATCC BAA-1301 / DSM 18059 / JW/NM-WN-LF) protein is Acyl carrier protein.